Consider the following 134-residue polypeptide: Large ribosomal subunit protein uL16c (134 aa).

The span at 1 to 17 shows a compositional bias: basic residues; it reads MLSPKRTRFRKQHRGRM. The tract at residues 1–22 is disordered; that stretch reads MLSPKRTRFRKQHRGRMKGISS.

Belongs to the universal ribosomal protein uL16 family. Part of the 50S ribosomal subunit.

It is found in the plastid. It localises to the chloroplast. The chain is Large ribosomal subunit protein uL16c from Solanum tuberosum (Potato).